The sequence spans 286 residues: Bifunctional protein FolD 2 (286 aa).

NADP(+) contacts are provided by residues glycine 165 to glycine 167, threonine 192, and isoleucine 233.

Belongs to the tetrahydrofolate dehydrogenase/cyclohydrolase family. As to quaternary structure, homodimer.

It catalyses the reaction (6R)-5,10-methylene-5,6,7,8-tetrahydrofolate + NADP(+) = (6R)-5,10-methenyltetrahydrofolate + NADPH. The enzyme catalyses (6R)-5,10-methenyltetrahydrofolate + H2O = (6R)-10-formyltetrahydrofolate + H(+). It functions in the pathway one-carbon metabolism; tetrahydrofolate interconversion. Functionally, catalyzes the oxidation of 5,10-methylenetetrahydrofolate to 5,10-methenyltetrahydrofolate and then the hydrolysis of 5,10-methenyltetrahydrofolate to 10-formyltetrahydrofolate. The protein is Bifunctional protein FolD 2 of Salinispora arenicola (strain CNS-205).